A 152-amino-acid polypeptide reads, in one-letter code: 6,7-dimethyl-8-ribityllumazine synthase (152 aa).

5-amino-6-(D-ribitylamino)uracil is bound by residues Phe21, 55–57 (AFE), and 79–81 (CVI). Residue 84–85 (ST) coordinates (2S)-2-hydroxy-3-oxobutyl phosphate. The active-site Proton donor is the His87. Phe112 serves as a coordination point for 5-amino-6-(D-ribitylamino)uracil. Residue Arg126 coordinates (2S)-2-hydroxy-3-oxobutyl phosphate.

This sequence belongs to the DMRL synthase family. In terms of assembly, forms an icosahedral capsid composed of 60 subunits, arranged as a dodecamer of pentamers.

The catalysed reaction is (2S)-2-hydroxy-3-oxobutyl phosphate + 5-amino-6-(D-ribitylamino)uracil = 6,7-dimethyl-8-(1-D-ribityl)lumazine + phosphate + 2 H2O + H(+). Its pathway is cofactor biosynthesis; riboflavin biosynthesis; riboflavin from 2-hydroxy-3-oxobutyl phosphate and 5-amino-6-(D-ribitylamino)uracil: step 1/2. In terms of biological role, catalyzes the formation of 6,7-dimethyl-8-ribityllumazine by condensation of 5-amino-6-(D-ribitylamino)uracil with 3,4-dihydroxy-2-butanone 4-phosphate. This is the penultimate step in the biosynthesis of riboflavin. The sequence is that of 6,7-dimethyl-8-ribityllumazine synthase from Staphylococcus saprophyticus subsp. saprophyticus (strain ATCC 15305 / DSM 20229 / NCIMB 8711 / NCTC 7292 / S-41).